A 481-amino-acid polypeptide reads, in one-letter code: Putative F-box/FBD/LRR-repeat protein At5g25850 (481 aa).

One can recognise an F-box domain in the interval 19–69; the sequence is INRLSQLSDPLICQILSHLPIKEVVTTSVLSTRWKNIWLSVPSLELIYSIF. 3 LRR repeats span residues 123–151, 173–198, and 328–356; these read VRRV…KLFH, VWFP…KIDV, and HVTL…IVAF. The 52-residue stretch at 401–452 folds into the FBD domain; the sequence is QLSFSSVPKCLLSSLQFVELNAQILRFDGEILNLAKYFLENSSILQKLTLHP.

This chain is Putative F-box/FBD/LRR-repeat protein At5g25850, found in Arabidopsis thaliana (Mouse-ear cress).